The following is a 246-amino-acid chain: MyoD family inhibitor domain-containing protein (246 aa).

The disordered stretch occupies residues 1 to 71 (MSGAGEALAP…WGNPSDGELI (71 aa)). Over residues 33–43 (KCDKDNTEKDI) the composition is skewed to basic and acidic residues. The segment covering 44 to 63 (TQATNSHFTHGEMQDQSIWG) has biased composition (polar residues). Positions 74–246 (QPQRLPQLQT…MECCGICFPS (173 aa)) constitute an MDFI domain. S128, S140, and S143 each carry phosphoserine.

It belongs to the MDFI family. As to quaternary structure, interacts with HAND1; the interaction sequesters HAND1 into the nucleolus and inhibits its activity. Interacts (via C-terminus) with ZIC2. Interacts (via C-terminus) with AXIN1, the histidine-rich region of CCNT1/cyclin-T and weakly with LEF1. Interacts with CCNT2. Interacts with GATA2. Interacts (via C-terminus) with Piezo channel composed of PIEZO1 or PIEZO2; the interaction prolongs Piezo channel inactivation. In terms of assembly, (Microbial infection) Interacts (via C-terminus) with HIV-1 Tat and Rev. In terms of processing, palmitoylated. Expressed in lymphatic tissues. Detected in the spleen, thymus, peripheral blood leukocytes as well as prostate, uterus and small intestine. Expressed in lymphatic endothelial cells.

The protein resides in the nucleus. Its subcellular location is the nucleolus. The protein localises to the cytoplasm. It is found in the secreted. Required to control the activity of various transcription factors through their sequestration in the cytoplasm. Retains nuclear Zic proteins ZIC1, ZIC2 and ZIC3 in the cytoplasm and inhibits their transcriptional activation. Modulates the expression from cellular promoters. Binds to the axin complex, resulting in an increase in the level of free beta-catenin. Affects axin regulation of the WNT and JNK signaling pathways. Involved in the development of lymphatic vessel valves. Required to promote lymphatic endothelial cell migration, in a process that involves down-regulation of integrin beta 1 activation and control of cell adhesion to the extracellular matrix. Regulates the activity of mechanosensitive Piezo channel. Functionally, (Microbial infection) Modulates the expression from viral promoters. Down-regulates Tat-dependent transcription of the human immunodeficiency virus type 1 (HIV-1) LTR by interacting with HIV-1 Tat and Rev and impairing their nuclear import, probably by rendering the NLS domains inaccessible to importin-beta. Also stimulates activation of human T-cell leukemia virus type I (HTLV-I) LTR. This is MyoD family inhibitor domain-containing protein from Homo sapiens (Human).